The following is a 238-amino-acid chain: Heme oxygenase (238 aa).

Position 17 (H17) interacts with heme b.

Belongs to the heme oxygenase family.

The protein localises to the plastid. The protein resides in the chloroplast. The enzyme catalyses heme b + 3 reduced [NADPH--hemoprotein reductase] + 3 O2 = biliverdin IXalpha + CO + Fe(2+) + 3 oxidized [NADPH--hemoprotein reductase] + 3 H2O + H(+). Its function is as follows. Catalyzes the opening of the heme ring with the release of iron. Key enzyme in the synthesis of the chromophoric part of the photosynthetic antennae. The protein is Heme oxygenase (pbsA) of Pyropia yezoensis (Susabi-nori).